The following is a 283-amino-acid chain: Phosphatidylglycerol--prolipoprotein diacylglyceryl transferase (283 aa).

3 consecutive transmembrane segments (helical) span residues 17–37, 56–76, and 92–112; these read LAVR…TFLG, FLTW…VLFY, and WEGG…IWLF. A 1,2-diacyl-sn-glycero-3-phospho-(1'-sn-glycerol) is bound at residue Arg139. Helical transmembrane passes span 222-242 and 255-275; these read GQTA…AEFA and GLSM…VGFV.

The protein belongs to the Lgt family.

The protein localises to the cell inner membrane. The enzyme catalyses L-cysteinyl-[prolipoprotein] + a 1,2-diacyl-sn-glycero-3-phospho-(1'-sn-glycerol) = an S-1,2-diacyl-sn-glyceryl-L-cysteinyl-[prolipoprotein] + sn-glycerol 1-phosphate + H(+). Its pathway is protein modification; lipoprotein biosynthesis (diacylglyceryl transfer). Its function is as follows. Catalyzes the transfer of the diacylglyceryl group from phosphatidylglycerol to the sulfhydryl group of the N-terminal cysteine of a prolipoprotein, the first step in the formation of mature lipoproteins. The sequence is that of Phosphatidylglycerol--prolipoprotein diacylglyceryl transferase from Neisseria gonorrhoeae (strain ATCC 700825 / FA 1090).